The primary structure comprises 495 residues: Acetyl-coenzyme A carboxylase carboxyl transferase subunit beta, chloroplastic (495 aa).

The segment at 187-208 (ESRNSSENEGSSRRTRTKGSDL) is disordered. The CoA carboxyltransferase N-terminal domain maps to 226–495 (LWVQCENCYG…PLNQKSSKIK (270 aa)). 4 residues coordinate Zn(2+): Cys230, Cys233, Cys249, and Cys252. A C4-type zinc finger spans residues 230-252 (CENCYGLNYKKFLKSKMNICEQC).

This sequence belongs to the AccD/PCCB family. In terms of assembly, acetyl-CoA carboxylase is a heterohexamer composed of biotin carboxyl carrier protein, biotin carboxylase and 2 subunits each of ACCase subunit alpha and ACCase plastid-coded subunit beta (accD). Zn(2+) is required as a cofactor. RNA expressed in leaf, root and stem; the least expression occurs in stems.

The protein localises to the plastid. It is found in the chloroplast stroma. The catalysed reaction is N(6)-carboxybiotinyl-L-lysyl-[protein] + acetyl-CoA = N(6)-biotinyl-L-lysyl-[protein] + malonyl-CoA. It functions in the pathway lipid metabolism; malonyl-CoA biosynthesis; malonyl-CoA from acetyl-CoA: step 1/1. Component of the acetyl coenzyme A carboxylase (ACC) complex. Biotin carboxylase (BC) catalyzes the carboxylation of biotin on its carrier protein (BCCP) and then the CO(2) group is transferred by the transcarboxylase to acetyl-CoA to form malonyl-CoA. The protein is Acetyl-coenzyme A carboxylase carboxyl transferase subunit beta, chloroplastic of Nicotiana tabacum (Common tobacco).